Reading from the N-terminus, the 442-residue chain is Galactose/N-acetylgalactosamine-binding lectin CEL-III (442 aa).

A propeptide spans 1-10 (MVSLVPCGFA) (removed in mature form). The residue at position 11 (glutamine 11) is a Pyrrolidone carboxylic acid. Positions 11–304 (QVLCTNPLDI…DWEVPTATWN (294 aa)) are has hemagglutinating activity towards rabbit erythrocytes, but no hemolytic activity towards them. Disulfide bonds link cysteine 14–cysteine 59, cysteine 31–cysteine 48, and cysteine 72–cysteine 88. D-galactose is bound by residues aspartate 19 and 33–36 (DIVG). Ricin B-type lectin domains lie at 28–102 (SKQC…RWRL) and 115–245 (EQVA…WSRP). Ca(2+) contacts are provided by aspartate 33, isoleucine 34, and glycine 36. Residues asparagine 42 and isoleucine 43 each contribute to the Mg(2+) site. Position 49 (aspartate 49) interacts with D-galactose. Aspartate 53 is a binding site for Ca(2+). Residues asparagine 82 and valine 83 each contribute to the Mg(2+) site. D-galactose is bound by residues valine 117 and 131 to 134 (DVEG). The cysteines at positions 129 and 146 are disulfide-linked. The Ca(2+) site is built by aspartate 131, valine 132, and glycine 134. Isoleucine 141 is a Mg(2+) binding site. 144 to 147 (YDCQ) contributes to the D-galactose binding site. The Ca(2+) site is built by aspartate 151, aspartate 178, valine 179, and glycine 181. Residues cysteine 176 and cysteine 193 are joined by a disulfide bond. 178-181 (DVEG) is a D-galactose binding site. Mg(2+) contacts are provided by asparagine 187 and valine 188. 191–194 (YSCE) contacts D-galactose. Positions 198, 219, 220, and 222 each coordinate Ca(2+). A disulfide bridge connects residues cysteine 217 and cysteine 234. 219 to 222 (DVEG) serves as a coordination point for D-galactose. Residues asparagine 228 and valine 229 each contribute to the Mg(2+) site. 232 to 235 (YRCD) provides a ligand contact to D-galactose. Aspartate 239 is a Ca(2+) binding site. Cystine bridges form between cysteine 249-cysteine 254 and cysteine 264-cysteine 281. The 33-residue stretch at 261–293 (SNKCLDVSGDQGTGDVGTWQCDGLPDQRFKWVF) folds into the Ricin B-type lectin 3 domain. Ca(2+) is bound by residues aspartate 266, valine 267, and glycine 269. Residue 266–269 (DVSG) coordinates D-galactose. Aspartate 275 and valine 276 together coordinate Mg(2+). D-galactose-binding positions include 279 to 282 (WQCD) and aspartate 286. Ca(2+) is bound at residue aspartate 286. The has a strong tendency to self-associate leading to formation of oligomers stretch occupies residues 294–442 (DDWEVPTATW…NEDCTFCTDI (149 aa)). 4 cysteine pairs are disulfide-bonded: cysteine 308–cysteine 390, cysteine 377–cysteine 416, cysteine 425–cysteine 439, and cysteine 431–cysteine 436.

As to quaternary structure, oligomerizes in the human and rabbit erythrocyte membranes. Oligomerization is induced by binding of beta-1,4-linked disaccharide ligands such as lactose, lactulose, N-acetyllactosamine and phenyl-beta-D-galactoside, but only a little by N-acetylgalactosamine and galactose, and not at all by melibiose in aqueous solution in the presence of high salt concentration and pH 10. Forms heptamers that assemble into larger 21mer oligomers, which may be inserted as a transmembrane pore to the erythrocyte membrane. Requires Ca(2+) as cofactor. It depends on Mg(2+) as a cofactor. In terms of tissue distribution, expressed in body fluid (at protein level).

The protein localises to the secreted. Ca(2+) is required for hemolytic activity and the activity increases with increasing calcium concentration. Hemolytic activity is inhibited by N-acetylgalactosamine (GalNAc), lactose, lactulose, galactosamine, dextran with molecular masses greater than 4 kDa, to a lesser extent by inulin and only slightly by sucrose and melezitose, but not by glucose or mannose. The activity is abolished in the presence of 10 mM EDTA. Lactose-binding increases with increasing calcium concentration, but calcium has no effect on hemagglutinating activity. Cytotoxic effect on Madin-Darby canine kidney (MDCK) cell line is strongly inhibited by galactose, lactose and N-acetylgalactosamine (GalNAc), but not by raffinose, N-acetylglucosamine (GlcNAc), glucose, mannose, ribose or sucrose. Pore formation in artificial lactosyl ceramide (LacCer) or globotetraosylceramide (Gb4Cer) containing liposomes is strongly inhibited by lactose. In terms of biological role, galactose/N-acetylgalactosamine (Gal/GalNAc)-binding lectin with hemolytic activity. Favors saccharides that have a beta-1,4 linkage at the non-reducing end rather than saccharides having alpha-1,6 or alpha-1,4 linkages. Binds lactose, lactulose, GalNAc, galactosamine, methyl alpha-galactopyranoside, methyl beta-galactopyranoside, N-acetyllactosamine, p-nitrophenyl beta-D-galactopyranoside (pNP-Gal), p-nitrophenyl N-acetyl-beta-D-galactosaminide (pNP-GalNAc), asialofetuin, and human erythrocyte membrane lipids lactosyl ceramide (LacCer) and globoside globotetraosylceramide (Gb4Cer). Binds moderately to galactose, melibiose, raffinose, fucose, methyl alpha-galactoside and methyl beta-galactoside. Binds weakly to glucose, mannose and N-acetylglucosamine (GlcNAc). Has hemolytic activity towards human (A, B and O-type), rabbit and rat erythrocytes, but not towards mouse, chicken or horse erythrocytes. Forms ion-permeable transmembrane pores in the erythrocyte membrane as well as in artificial liposomes containing human erythrocyte membrane lipids LacCer, Gb4Cer and galactosyl ceramide (GalCer) leading to destruction of the membrane. Has hemagglutinating activity towards rabbit, human and rat erythrocytes, and at relatively high concentrations towards chicken and horse erythrocytes, but not towards mouse erythrocytes. Has dose-dependent cytotoxic effect on Madin-Darby canine kidney (MDCK), African green monkey kidney (Vero) and human epithelia carcinoma (HeLa) cell lines, but Chinese hamster ovary (CHO), rat sarcoma (XC) and potoroo rat kangaroo kidney (PtK1) cells are highly resistant to the cytotoxic effect of this protein. Impairs malaria parasite development in malaria parasite infected transgenic A.stephensi mosquitoes expressing this protein specifically in their midguts. Binds to ookinetes and leads to strong dose-dependent inhibition of ookinete formation in vitro. Leads to severely impaired oocyst formation and significantly reduced sporozoite production of rodent malaria parasite P.berghei in the salivary glands of the transgenic mosquitoes. The parasite transmission to uninfected mice (vectorial competence) of these mosquitoes is significantly impaired. Also leads to severely impaired oocyst formation of human malaria parasite P.falciparum in transgenic mosquitoes fed on mature P.falciparum gametocyte cultures. May be involved in defense mechanisms acting as a toxic protein to foreign microorganisms. May act in defense against predators. The sequence is that of Galactose/N-acetylgalactosamine-binding lectin CEL-III from Pseudocnus echinatus (Sea cucumber).